Here is a 424-residue protein sequence, read N- to C-terminus: MKILKKKKKGNQQIVPDERYRELDSHAPNENEIADEAPMSRKILYYLKLVYHEIRENITIYLLIILYLCVCVMNKIMAKRTLKKIGNYSFVTSETHNTICMVVFFSLYFIFGRRVTSAKERHQNFGLQFLLISLLDACSVIIAFIGLTRTTGNIQSFVMQLSIPINMFFCFLILRYRYHLFNYVGASIIVLTIAIVEFILSFETQEENSIVFNLVLIASLIPMSFSNMTREIVFKKYKINILRLNAVVSFFQIFTSCLMLPMYTLPFLKQINLPFSEIGTNIKNGFRCLILGQNTIVENCGLGMAKMCDDCEGAWKTFLAYSFFNICDNLITSFIIDKFSTMTYTIVSCIQGPAIAIAYYFKFLAGDAVMKPRVLDFVTLFGYLFGSIIYRVGNIILEKKKMMEAGNDDDSEGELTNAESIITQ.

Topologically, residues 1 to 57 (MKILKKKKKGNQQIVPDERYRELDSHAPNENEIADEAPMSRKILYYLKLVYHEIREN) are cytoplasmic. A helical transmembrane segment spans residues 58–78 (ITIYLLIILYLCVCVMNKIMA). The Vacuolar segment spans residues 79-89 (KRTLKKIGNYS). Asn-87 is a glycosylation site (N-linked (GlcNAc...) asparagine). The helical transmembrane segment at 90 to 110 (FVTSETHNTICMVVFFSLYFI) threads the bilayer. At 111 to 124 (FGRRVTSAKERHQN) the chain is on the cytoplasmic side. The helical transmembrane segment at 125–145 (FGLQFLLISLLDACSVIIAFI) threads the bilayer. At 146 to 153 (GLTRTTGN) the chain is on the vacuolar side. The helical transmembrane segment at 154–174 (IQSFVMQLSIPINMFFCFLIL) threads the bilayer. Residues 175–179 (RYRYH) lie on the Cytoplasmic side of the membrane. Residues 180-200 (LFNYVGASIIVLTIAIVEFIL) traverse the membrane as a helical segment. The Vacuolar portion of the chain corresponds to 201–208 (SFETQEEN). Residues 209 to 229 (SIVFNLVLIASLIPMSFSNMT) form a helical membrane-spanning segment. Over 230 to 246 (REIVFKKYKINILRLNA) the chain is Cytoplasmic. A helical membrane pass occupies residues 247 to 267 (VVSFFQIFTSCLMLPMYTLPF). Over 268 to 316 (LKQINLPFSEIGTNIKNGFRCLILGQNTIVENCGLGMAKMCDDCEGAWK) the chain is Vacuolar. Intrachain disulfides connect Cys-288-Cys-311 and Cys-300-Cys-308. The chain crosses the membrane as a helical span at residues 317-337 (TFLAYSFFNICDNLITSFIID). At 338–345 (KFSTMTYT) the chain is on the cytoplasmic side. Residues 346-366 (IVSCIQGPAIAIAYYFKFLAG) form a helical membrane-spanning segment. Topologically, residues 367 to 376 (DAVMKPRVLD) are vacuolar. Residues 377 to 397 (FVTLFGYLFGSIIYRVGNIIL) traverse the membrane as a helical segment. At 398–424 (EKKKMMEAGNDDDSEGELTNAESIITQ) the chain is on the cytoplasmic side.

This sequence belongs to the CRT-like transporter family.

It localises to the vacuole membrane. Nutrient transporter. Involved in maintaining the osmotic homeostasis of the digestive vacuole. In Plasmodium knowlesi, this protein is Putative chloroquine resistance transporter.